Consider the following 502-residue polypeptide: MSYFPWLTVIVVLPISAGSSIFFVPYRGNKNKVIRWYTICICLLEILLTTYAFCYHFQSDDPLIQLEEAYKWIHIFDFHWRPGIDGLSIGPILLTGFITTLATLAARPVTRDSRLFHFLMLAMYSGQVGSFSSRDLLLFFLMWELELIPVYLLLSMWGGKKRMYSATKFILYTAGGSIFLLMGVSGMGLYGSNEPTLNFETLANQSYPLGLEIIFYFGFLIAYAVKSPIIPLHTWLPDTHGEAHYSTCMLLAGILLKMGAYGLVRINMELLPHAHSIFSPWLVIVGAIQIIYAASTSFGQRNFKKRIAYSSVSHMGFTLIGIGSITDTGLNGAILQIISHGFIGAALFFLAGTSYDRIRLVYLDEMGGIAIPMPKIFTMFSSFSMASLALPGMSGFVAELVVFFGIITSSKYLLMPKIVISFVMAIGMILTPIYSLSMLRRMFYGYKLFNVPDFYFLDSGPRELFVSICIFLPVVGIGIYPDFVLSLSVDRVEAILSNYFHK.

14 consecutive transmembrane segments (helical) span residues 4–24 (FPWL…IFFV), 37–57 (YTIC…CYHF), 86–106 (GLSI…TLAA), 113–131 (SRLF…VGSF), 136–156 (LLLF…LLSM), 169–189 (FILY…GMGL), 210–230 (GLEI…SPII), 244–264 (HYST…YGLV), 274–294 (AHSI…IYAA), 307–327 (IAYS…SITD), 332–352 (GAIL…FLAG), 388–408 (LALP…GIIT), 418–438 (IVIS…SLSM), and 464–484 (LFVS…PDFV).

The protein belongs to the complex I subunit 4 family.

It localises to the plastid. The protein resides in the chloroplast thylakoid membrane. It catalyses the reaction a plastoquinone + NADH + (n+1) H(+)(in) = a plastoquinol + NAD(+) + n H(+)(out). The catalysed reaction is a plastoquinone + NADPH + (n+1) H(+)(in) = a plastoquinol + NADP(+) + n H(+)(out). The protein is NAD(P)H-quinone oxidoreductase chain 4, chloroplastic of Calycanthus floridus var. glaucus (Eastern sweetshrub).